Here is a 177-residue protein sequence, read N- to C-terminus: Inorganic pyrophosphatase (177 aa).

Positions 30, 44, and 56 each coordinate substrate. 3 residues coordinate Mg(2+): D66, D71, and D103. Y142 is a binding site for substrate.

This sequence belongs to the PPase family. In terms of assembly, homohexamer. It depends on Mg(2+) as a cofactor.

It is found in the cytoplasm. It catalyses the reaction diphosphate + H2O = 2 phosphate + H(+). Catalyzes the hydrolysis of inorganic pyrophosphate (PPi) forming two phosphate ions. This chain is Inorganic pyrophosphatase, found in Mesorhizobium japonicum (strain LMG 29417 / CECT 9101 / MAFF 303099) (Mesorhizobium loti (strain MAFF 303099)).